Consider the following 251-residue polypeptide: Triosephosphate isomerase (251 aa).

Residue 9 to 11 (NWK) coordinates substrate. Residue His94 is the Electrophile of the active site. Glu166 functions as the Proton acceptor in the catalytic mechanism. Substrate contacts are provided by residues Gly172, Ser211, and 232–233 (GG).

This sequence belongs to the triosephosphate isomerase family. Homodimer.

It is found in the cytoplasm. It catalyses the reaction D-glyceraldehyde 3-phosphate = dihydroxyacetone phosphate. Its pathway is carbohydrate biosynthesis; gluconeogenesis. It functions in the pathway carbohydrate degradation; glycolysis; D-glyceraldehyde 3-phosphate from glycerone phosphate: step 1/1. Involved in the gluconeogenesis. Catalyzes stereospecifically the conversion of dihydroxyacetone phosphate (DHAP) to D-glyceraldehyde-3-phosphate (G3P). The polypeptide is Triosephosphate isomerase (Xanthomonas oryzae pv. oryzae (strain MAFF 311018)).